A 151-amino-acid chain; its full sequence is UPF0178 protein CJA_1978 (151 aa).

It belongs to the UPF0178 family.

This chain is UPF0178 protein CJA_1978, found in Cellvibrio japonicus (strain Ueda107) (Pseudomonas fluorescens subsp. cellulosa).